A 1408-amino-acid polypeptide reads, in one-letter code: DNA-directed RNA polymerase subunit beta'' (1408 aa).

It belongs to the RNA polymerase beta' chain family. RpoC2 subfamily. As to quaternary structure, in plastids the minimal PEP RNA polymerase catalytic core is composed of four subunits: alpha, beta, beta', and beta''. When a (nuclear-encoded) sigma factor is associated with the core the holoenzyme is formed, which can initiate transcription.

It localises to the plastid. It is found in the chloroplast. It carries out the reaction RNA(n) + a ribonucleoside 5'-triphosphate = RNA(n+1) + diphosphate. Its function is as follows. DNA-dependent RNA polymerase catalyzes the transcription of DNA into RNA using the four ribonucleoside triphosphates as substrates. This Psilotum nudum (Whisk fern) protein is DNA-directed RNA polymerase subunit beta''.